A 385-amino-acid polypeptide reads, in one-letter code: T-box transcription factor TBX10 (385 aa).

The interval Thr-22–Arg-61 is disordered. Positions Leu-69 to Glu-252 form a DNA-binding region, T-box.

It is found in the nucleus. Its function is as follows. Probable transcriptional regulator involved in developmental processes. In Homo sapiens (Human), this protein is T-box transcription factor TBX10 (TBX10).